The following is a 285-amino-acid chain: Elongation factor Ts (285 aa).

Residues 82–85 form an involved in Mg(2+) ion dislocation from EF-Tu region; that stretch reads TDFV.

The protein belongs to the EF-Ts family.

Its subcellular location is the cytoplasm. Its function is as follows. Associates with the EF-Tu.GDP complex and induces the exchange of GDP to GTP. It remains bound to the aminoacyl-tRNA.EF-Tu.GTP complex up to the GTP hydrolysis stage on the ribosome. The protein is Elongation factor Ts of Yersinia pseudotuberculosis serotype O:1b (strain IP 31758).